Reading from the N-terminus, the 707-residue chain is Polyribonucleotide nucleotidyltransferase (707 aa).

Mg(2+)-binding residues include D486 and D492. In terms of domain architecture, KH spans 553 to 612; it reads PRIHTIKINPEKIKDVIGKGGSVIRALTEETGTTIEIEDDGTVKIAATDGDKAKHAIRRI. The region spanning 622–690 is the S1 motif domain; sequence GRIYQGKVTR…RQGRVRLSIK (69 aa).

This sequence belongs to the polyribonucleotide nucleotidyltransferase family. In terms of assembly, component of the RNA degradosome, which is a multiprotein complex involved in RNA processing and mRNA degradation. Mg(2+) serves as cofactor.

The protein localises to the cytoplasm. It carries out the reaction RNA(n+1) + phosphate = RNA(n) + a ribonucleoside 5'-diphosphate. Its function is as follows. Involved in mRNA degradation. Catalyzes the phosphorolysis of single-stranded polyribonucleotides processively in the 3'- to 5'-direction. The polypeptide is Polyribonucleotide nucleotidyltransferase (Edwardsiella ictaluri (strain 93-146)).